The primary structure comprises 329 residues: Delta-aminolevulinic acid dehydratase (329 aa).

Lys202 serves as the catalytic Schiff-base intermediate with substrate. The 5-aminolevulinate site is built by Arg212 and Arg223. Glu239 serves as a coordination point for Mg(2+). The active-site Schiff-base intermediate with substrate is Lys254. Residues Ser280 and Tyr319 each contribute to the 5-aminolevulinate site.

This sequence belongs to the ALAD family. As to quaternary structure, homooctamer.

The enzyme catalyses 2 5-aminolevulinate = porphobilinogen + 2 H2O + H(+). Its pathway is porphyrin-containing compound metabolism; protoporphyrin-IX biosynthesis; coproporphyrinogen-III from 5-aminolevulinate: step 1/4. Its function is as follows. Catalyzes an early step in the biosynthesis of tetrapyrroles. Binds two molecules of 5-aminolevulinate per subunit, each at a distinct site, and catalyzes their condensation to form porphobilinogen. The sequence is that of Delta-aminolevulinic acid dehydratase (hemB) from Mycobacterium tuberculosis (strain CDC 1551 / Oshkosh).